The primary structure comprises 768 residues: C-type polyheme cytochrome OmcC (768 aa).

An N-terminal signal peptide occupies residues 1-23 (MSRKVTKYSAVLAVSLFAAALAG). C24 is lipidated: N-palmitoyl cysteine. C24 carries S-diacylglycerol cysteine lipidation. Positions 48, 51, 52, 80, 83, 84, 112, 115, 116, 148, 151, 152, 193, 196, 197, 238, 241, 242, 320, 323, 324, 405, 408, 409, 454, 457, 458, 504, 507, 508, 579, 582, 583, 611, 614, and 615 each coordinate heme c.

In terms of processing, binds 12 heme c groups per subunit.

It is found in the cell outer membrane. Not involved in Fe(3+) reduction. This is C-type polyheme cytochrome OmcC (omcC) from Geobacter sulfurreducens (strain ATCC 51573 / DSM 12127 / PCA).